Consider the following 1178-residue polypeptide: DNA-directed RNA polymerase subunit beta' (1178 aa).

Zn(2+) contacts are provided by C60, C62, C75, and C78. D450, D452, and D454 together coordinate Mg(2+). The Zn(2+) site is built by C795, C869, C876, and C879.

The protein belongs to the RNA polymerase beta' chain family. As to quaternary structure, the RNAP catalytic core consists of 2 alpha, 1 beta, 1 beta' and 1 omega subunit. When a sigma factor is associated with the core the holoenzyme is formed, which can initiate transcription. Mg(2+) serves as cofactor. It depends on Zn(2+) as a cofactor.

It catalyses the reaction RNA(n) + a ribonucleoside 5'-triphosphate = RNA(n+1) + diphosphate. In terms of biological role, DNA-dependent RNA polymerase catalyzes the transcription of DNA into RNA using the four ribonucleoside triphosphates as substrates. The chain is DNA-directed RNA polymerase subunit beta' from Clostridium beijerinckii (strain ATCC 51743 / NCIMB 8052) (Clostridium acetobutylicum).